Here is a 218-residue protein sequence, read N- to C-terminus: uncharacterized protein (218 aa).

Helical transmembrane passes span 19 to 39 (VFGFSEFSIIGFITAVIFTII), 92 to 112 (FDYALFLTLVGIANIGIVSAV), 124 to 144 (YGLIAMIATLPLFGSAGMILA), 161 to 181 (LLFEKIIFAAGMAGETGIAPF), and 196 to 216 (YILMIHLSSLLLIVRTVEILL).

It is found in the cell membrane. This is an uncharacterized protein from Methanocaldococcus jannaschii (strain ATCC 43067 / DSM 2661 / JAL-1 / JCM 10045 / NBRC 100440) (Methanococcus jannaschii).